We begin with the raw amino-acid sequence, 134 residues long: Phosphoribosyl-AMP cyclohydrolase (134 aa).

Position 80 (Asp-80) interacts with Mg(2+). A Zn(2+)-binding site is contributed by Cys-81. Asp-82 and Asp-84 together coordinate Mg(2+). Residues Cys-98 and Cys-105 each contribute to the Zn(2+) site.

It belongs to the PRA-CH family. As to quaternary structure, homodimer. Requires Mg(2+) as cofactor. The cofactor is Zn(2+).

The protein resides in the cytoplasm. The enzyme catalyses 1-(5-phospho-beta-D-ribosyl)-5'-AMP + H2O = 1-(5-phospho-beta-D-ribosyl)-5-[(5-phospho-beta-D-ribosylamino)methylideneamino]imidazole-4-carboxamide. It functions in the pathway amino-acid biosynthesis; L-histidine biosynthesis; L-histidine from 5-phospho-alpha-D-ribose 1-diphosphate: step 3/9. Functionally, catalyzes the hydrolysis of the adenine ring of phosphoribosyl-AMP. In Bordetella bronchiseptica (strain ATCC BAA-588 / NCTC 13252 / RB50) (Alcaligenes bronchisepticus), this protein is Phosphoribosyl-AMP cyclohydrolase.